Here is an 884-residue protein sequence, read N- to C-terminus: Translation initiation factor IF-2 (884 aa).

Composition is skewed to basic and acidic residues over residues 110 to 153 and 193 to 234; these read AKAK…KEKA and KQKE…DHHV. Positions 110–291 are disordered; the sequence is AKAKAEADAK…NRSTAPQSMA (182 aa). Over residues 255-268 the composition is skewed to basic residues; sequence GRRARNKPTNKKRG. A tr-type G domain is found at 384–553; sequence TRAPVVTIMG…LLQSEVLELK (170 aa). The G1 stretch occupies residues 393 to 400; the sequence is GHVDHGKT. GTP is bound at residue 393 to 400; the sequence is GHVDHGKT. The G2 stretch occupies residues 418–422; sequence GITQH. A G3 region spans residues 439-442; that stretch reads DTPG. GTP-binding positions include 439–443 and 493–496; these read DTPGH and NKMD. Residues 493–496 form a G4 region; the sequence is NKMD. A G5 region spans residues 529–531; that stretch reads SAK.

The protein belongs to the TRAFAC class translation factor GTPase superfamily. Classic translation factor GTPase family. IF-2 subfamily.

It localises to the cytoplasm. Functionally, one of the essential components for the initiation of protein synthesis. Protects formylmethionyl-tRNA from spontaneous hydrolysis and promotes its binding to the 30S ribosomal subunits. Also involved in the hydrolysis of GTP during the formation of the 70S ribosomal complex. The polypeptide is Translation initiation factor IF-2 (Shewanella denitrificans (strain OS217 / ATCC BAA-1090 / DSM 15013)).